We begin with the raw amino-acid sequence, 131 residues long: ER membrane protein complex subunit 5 (131 aa).

The Cytoplasmic segment spans residues 1–3; sequence MAP. The chain crosses the membrane as a helical span at residues 4 to 22; that stretch reads SLWKGLVGIGLFALAHAAF. Topologically, residues 23–43 are lumenal; that stretch reads SAAQHRSYMRLTEKEDESLPI. A helical transmembrane segment spans residues 44-63; the sequence is DIVLQTLLAFAVTCYGIVHI. Residues 64–131 are Cytoplasmic-facing; that stretch reads AGEFKDMDAT…KLRKLESLRR (68 aa). Ser120 is modified (phosphoserine).

The protein belongs to the membrane magnesium transporter (TC 1.A.67) family. Component of the ER membrane protein complex (EMC).

Its subcellular location is the endoplasmic reticulum membrane. It localises to the golgi apparatus membrane. The protein localises to the early endosome membrane. Its function is as follows. Part of the endoplasmic reticulum membrane protein complex (EMC) that enables the energy-independent insertion into endoplasmic reticulum membranes of newly synthesized membrane proteins. Preferentially accommodates proteins with transmembrane domains that are weakly hydrophobic or contain destabilizing features such as charged and aromatic residues. Involved in the cotranslational insertion of multi-pass membrane proteins in which stop-transfer membrane-anchor sequences become ER membrane spanning helices. It is also required for the post-translational insertion of tail-anchored/TA proteins in endoplasmic reticulum membranes. By mediating the proper cotranslational insertion of N-terminal transmembrane domains in an N-exo topology, with translocated N-terminus in the lumen of the ER, controls the topology of multi-pass membrane proteins like the G protein-coupled receptors. By regulating the insertion of various proteins in membranes, it is indirectly involved in many cellular processes. May be involved in Mg(2+) transport. The chain is ER membrane protein complex subunit 5 from Homo sapiens (Human).